Reading from the N-terminus, the 356-residue chain is Glutamine synthetase cytosolic isozyme 1-1 (356 aa).

The GS beta-grasp domain occupies 19–99 (IIAEYIWIGG…VMCDCYTPAG (81 aa)). In terms of domain architecture, GS catalytic spans 106-356 (KRHNAAKIFS…IAETTIIWKP (251 aa)).

It belongs to the glutamine synthetase family. Homooctamer. In terms of tissue distribution, highly expressed in leaf blades, at intermediate levels in spikelets (rice flower) and at lower levels in roots.

The protein localises to the cytoplasm. The enzyme catalyses L-glutamate + NH4(+) + ATP = L-glutamine + ADP + phosphate + H(+). In terms of biological role, high-affinity glutamine synthetase involved in ammonium assimilation. Seems to be a major component of the cytosolic glutamine synthetic pathway in leaf blades. Plays an important role in maintaining carbon and nitrogen metabolic balance during ammonium assimilation in shoots and roots, thus controlling plant growth and development. Plays an important role in maintaining broad range of metabolites and transcripts involved in the maintenance of plant metabolic homeostasis and development of plastid in roots. This Oryza sativa subsp. japonica (Rice) protein is Glutamine synthetase cytosolic isozyme 1-1.